Reading from the N-terminus, the 334-residue chain is Oligopeptide transport ATP-binding protein OppF (334 aa).

Positions 12-265 constitute an ABC transporter domain; the sequence is LEIADLKVHF…PLHPYTKALM (254 aa). Residue 57 to 64 coordinates ATP; the sequence is GESGCGKS.

This sequence belongs to the ABC transporter superfamily. The complex is composed of two ATP-binding proteins (OppD and OppF), two transmembrane proteins (OppB and OppC) and a solute-binding protein (OppA).

It is found in the cell inner membrane. It catalyses the reaction a [peptide](out) + ATP + H2O = a [peptide](in) + ADP + phosphate + H(+). The enzyme catalyses L-alanyl-gamma-D-glutamyl-meso-2,6-diaminopimelate(out) + ATP + H2O = L-alanyl-gamma-D-glutamyl-meso-2,6-diaminopimelate(in) + ADP + phosphate + H(+). Part of the ABC transporter complex OppABCDF involved in the uptake of oligopeptides, including the cell wall murein tripeptide L-alanyl-gamma-D-glutamyl-meso-diaminopimelate. Probably responsible for energy coupling to the transport system. Plays an important nutritional role and is involved in the recycling of cell wall peptides. In Salmonella typhimurium (strain LT2 / SGSC1412 / ATCC 700720), this protein is Oligopeptide transport ATP-binding protein OppF.